The sequence spans 233 residues: Uridylate kinase (233 aa).

9-10 serves as a coordination point for ATP; that stretch reads GS. Gly-43 is a UMP binding site. 2 residues coordinate ATP: Gly-44 and Arg-48. UMP is bound by residues Asp-65 and 113-119; that span reads VTPGQTT. ATP-binding residues include Thr-139, Tyr-145, and Asp-148.

The protein belongs to the UMP kinase family. In terms of assembly, homohexamer.

The protein localises to the cytoplasm. The catalysed reaction is UMP + ATP = UDP + ADP. It functions in the pathway pyrimidine metabolism; CTP biosynthesis via de novo pathway; UDP from UMP (UMPK route): step 1/1. With respect to regulation, inhibited by UTP. Functionally, catalyzes the reversible phosphorylation of UMP to UDP. This Methanosarcina mazei (strain ATCC BAA-159 / DSM 3647 / Goe1 / Go1 / JCM 11833 / OCM 88) (Methanosarcina frisia) protein is Uridylate kinase.